We begin with the raw amino-acid sequence, 131 residues long: C-glycoside deglycosidase beta subunit (131 aa).

It belongs to the C-glycoside deglycosidase beta subunit family. In terms of assembly, heterodimer composed of an alpha subunit (CarB1) and a beta subunit (CarC1). Mg(2+) is required as a cofactor.

The catalysed reaction is 3''-dehydroisovitexin = 1,5-anhydro-D-erythro-hex-1-en-3-ulose + apigenin. Its activity is regulated as follows. Activity is strongly reduced in the presence of chelating agents. Its function is as follows. Carbon-carbon bond-cleaving enzyme which participates in the metabolism of C-glycosides. Acts on the C6-glycosylated compound 3''-dehydroisovitexin (3''-oxo-isovitexin). Shows weak activity with 3''-dehydroisoorientin (3''-oxo-homoorientin) and 3'-dehydromangiferin (3'-oxo-mangiferin). This chain is C-glycoside deglycosidase beta subunit, found in Arthrobacter globiformis (strain ATCC 8010 / DSM 20124 / JCM 1332 / NBRC 12137 / NCIMB 8907 / NRRL B-2979 / 168).